Here is a 309-residue protein sequence, read N- to C-terminus: Ribose-phosphate pyrophosphokinase (309 aa).

ATP contacts are provided by residues 37-39 and 96-97; these read DGE and RQ. Residues His130 and Asp169 each coordinate Mg(2+). The active site involves Lys192. Residues Arg194, Asp218, and 222-226 each bind D-ribose 5-phosphate; that span reads DTAGT.

Belongs to the ribose-phosphate pyrophosphokinase family. Class I subfamily. As to quaternary structure, homohexamer. It depends on Mg(2+) as a cofactor.

It localises to the cytoplasm. It carries out the reaction D-ribose 5-phosphate + ATP = 5-phospho-alpha-D-ribose 1-diphosphate + AMP + H(+). It participates in metabolic intermediate biosynthesis; 5-phospho-alpha-D-ribose 1-diphosphate biosynthesis; 5-phospho-alpha-D-ribose 1-diphosphate from D-ribose 5-phosphate (route I): step 1/1. Involved in the biosynthesis of the central metabolite phospho-alpha-D-ribosyl-1-pyrophosphate (PRPP) via the transfer of pyrophosphoryl group from ATP to 1-hydroxyl of ribose-5-phosphate (Rib-5-P). The chain is Ribose-phosphate pyrophosphokinase from Helicobacter hepaticus (strain ATCC 51449 / 3B1).